A 731-amino-acid chain; its full sequence is Catalase-peroxidase (731 aa).

The tryptophyl-tyrosyl-methioninium (Trp-Tyr) (with M-252) cross-link spans 98 to 226; the sequence is WHAAGTYRTA…LAAVQMGLIY (129 aa). Residue His99 is the Proton acceptor of the active site. The segment at residues 226–252 is a cross-link (tryptophyl-tyrosyl-methioninium (Tyr-Met) (with W-98)); sequence YVNPEGPDGNPDIVASGHDVIETFGRM. His267 provides a ligand contact to heme b.

Belongs to the peroxidase family. Peroxidase/catalase subfamily. Homodimer or homotetramer. It depends on heme b as a cofactor. Formation of the three residue Trp-Tyr-Met cross-link is important for the catalase, but not the peroxidase activity of the enzyme.

It carries out the reaction H2O2 + AH2 = A + 2 H2O. The catalysed reaction is 2 H2O2 = O2 + 2 H2O. In terms of biological role, bifunctional enzyme with both catalase and broad-spectrum peroxidase activity. The protein is Catalase-peroxidase of Ruegeria pomeroyi (strain ATCC 700808 / DSM 15171 / DSS-3) (Silicibacter pomeroyi).